Reading from the N-terminus, the 396-residue chain is Protein BOP3 (396 aa).

Disordered regions lie at residues 1–22 (MSTF…NNVN), 98–126 (GVPA…ENLP), 145–168 (PTPM…GISH), 203–239 (VARR…KFTN), 254–274 (RDQQ…QQDL), and 355–396 (REGR…LNST). 3 stretches are compositionally biased toward polar residues: residues 111–124 (QPHN…SSEN), 159–168 (ASSSTGGISH), and 210–230 (GTKS…SRNL). The segment covering 355–369 (REGRQVHDDLDDRTC) has biased composition (basic and acidic residues). Residues 370 to 396 (SESSSRNESPVRTITKDNSVGKILNST) show a composition bias toward polar residues.

It localises to the cytoplasm. The protein localises to the nucleus. Functionally, involved in resistance to methylmercury. Overexpression suppresses a PAM1-SLV3 double null mutation. The polypeptide is Protein BOP3 (BOP3) (Saccharomyces cerevisiae (strain ATCC 204508 / S288c) (Baker's yeast)).